We begin with the raw amino-acid sequence, 743 residues long: MAPLLVPLKCGFHMQRRKLSLLLQRSSAVQAWTFHDHRAANKRKERNTYLLSDPSRESSTWANNRGQNSQQILEAVKHLHLQERQCWHGNAGGGLSADPKNVLKEVNSSKILGAMFTYVWPKDRPDLRARVVISLSLLAGAKITNVMVPFMFKYAVDSLNQMSGHMLNLSDAPNTVVTMATAVLIGYGVSRTGSALFNELRNAVFGKVAQSSIRRIAKNVFLHLHNLDLGFHLSRQTGALSKAIDRGTRGISFVLSALVFNLGPTLFEMMLVSGILYYKCGGHFALVTLGTLSAYTAFTVAVTQWRTQFRIEMNKADNEAGNAAIDSLLNYETVKYFNNEKYEAERYDGFLKVYESSSLKTTSTLAMLNFGQSAIFSVGLTAIMVLASKGIMSGTMTVGDLVMVNGLLFQLSLPLNFLGTVYRETRQALIDMNTLFTLLSVDTKIKEKEMAPPLIVTPQEATIRFEDVYFEYLEGQKVLNGVSFEVPAGKKVAIVGGSGSGKSTIVRLLFRFYEPQQGNIYIAGQNIRDVGLESLRKAVGVVPQDAVLFHNTIFYNLMYGNINATAEDVYRVARLAGIHDAILKMPHKYDTQVGERGLKLSGGEKQRVAIARAILKNPPILLYDEATSSLDSVTEENILTSMKEMVKDRTSVFIAHRLSTIVDADEIIVLNQGKVAERGNHQTLLDTPGSLYANLWNTQNSRILSNGSKPEPVPERVSQKEEERKKLQEEIMNSVKGCGNCSC.

The transit peptide at 1 to 19 (MAPLLVPLKCGFHMQRRKL) directs the protein to the mitochondrion. Topologically, residues 20 to 131 (SLLLQRSSAV…KDRPDLRARV (112 aa)) are mitochondrial matrix. The interval 45 to 64 (ERNTYLLSDPSRESSTWANN) is disordered. The ABC transmembrane type-1 domain maps to 131-427 (VVISLSLLAG…LGTVYRETRQ (297 aa)). Residues 132 to 152 (VISLSLLAGAKITNVMVPFMF) traverse the membrane as a helical segment. The Mitochondrial intermembrane segment spans residues 153–168 (KYAVDSLNQMSGHMLN). Residues 169–189 (LSDAPNTVVTMATAVLIGYGV) traverse the membrane as a helical segment. Over 190–250 (SRTGSALFNE…SKAIDRGTRG (61 aa)) the chain is Mitochondrial matrix. Residues 251 to 271 (ISFVLSALVFNLGPTLFEMML) form a helical membrane-spanning segment. Over 272-281 (VSGILYYKCG) the chain is Mitochondrial intermembrane. A helical transmembrane segment spans residues 282–302 (GHFALVTLGTLSAYTAFTVAV). Residues 303-364 (TQWRTQFRIE…ESSSLKTTST (62 aa)) are Mitochondrial matrix-facing. Glutathione is bound by residues 306-310 (RTQFR) and 369-372 (NFGQ). A helical membrane pass occupies residues 365 to 385 (LAMLNFGQSAIFSVGLTAIMV). The Mitochondrial intermembrane segment spans residues 386 to 400 (LASKGIMSGTMTVGD). Residues 401 to 421 (LVMVNGLLFQLSLPLNFLGTV) form a helical membrane-spanning segment. Gly419 is a glutathione binding site. The Mitochondrial matrix portion of the chain corresponds to 422–743 (YRETRQALID…SVKGCGNCSC (322 aa)). An ABC transporter domain is found at 463–697 (IRFEDVYFEY…PGSLYANLWN (235 aa)). ATP is bound by residues Tyr472 and 496-503 (GGSGSGKS). The tract at residues 703–724 (ILSNGSKPEPVPERVSQKEEER) is disordered. The segment covering 712–724 (PVPERVSQKEEER) has biased composition (basic and acidic residues).

This sequence belongs to the ABC transporter superfamily. ABCB family. Heavy Metal importer (TC 3.A.1.210) subfamily. In terms of assembly, homodimer.

It localises to the mitochondrion inner membrane. It carries out the reaction (glutathione)4[2Fe(III)-2S] cluster(in) + ATP + H2O = (glutathione)4[2Fe(III)-2S] cluster(out) + ADP + phosphate + H(+). Functionally, exports glutathione-coordinated iron-sulfur clusters such as [2Fe-2S]-(GS)4 cluster from the mitochondria to the cytosol in an ATP-dependent manner allowing the assembly of the cytosolic iron-sulfur (Fe/S) cluster-containing proteins and participates in iron homeostasis. May play a role in cadmium, zinc and mercury detoxification. In Danio rerio (Zebrafish), this protein is Iron-sulfur clusters transporter ABCB7, mitochondrial (abcb7).